Consider the following 510-residue polypeptide: MQLRSSEISELIKYRISKFNAESEMQDEGIIISISDGIIKIYGLNNIMQNEMIKLPEKTFAIALNLEKEIVGAVVMGSYFHLSEGMKVYSTGRILEVPTGNNLLGRVLNALGEPLDSKGDILHDCFSPIETIAPGVIDRLSINEPLQTGYKSIDSMVPIGKGQRELIIGDRQTGKSSLAIDTIINQKDSNIKCIYVSIGQKFSTVVKTVEKLKEHDALSNTIIVCATASDSAVLQYLAPYSGCTMGEYFRDRGEDSLIVYDDLSKQAIAYRQISLLLRRPPGREAYPGDIFYLHSRLLERSARVNEIYVENFTKGKVKNKSGSLTALPIVETQGGDISSFVPTNLISITDGQIFLESNLFNSGIRPAINPGISVSRVGGSAQTEIIRKLSGNIRTSLAQYNELSSFAQFSSDLDDSTKKQLQHGEKIIEILKQKQYSPMSLSKQALLLFAVQNKYLDKIKSSEVEKYENSLLKHAEKKYSNYMEKINKSYIYDDFVIKKLKKIMDSFEFF.

Position 169–176 (169–176) interacts with ATP; it reads GDRQTGKS.

The protein belongs to the ATPase alpha/beta chains family. In terms of assembly, F-type ATPases have 2 components, CF(1) - the catalytic core - and CF(0) - the membrane proton channel. CF(1) has five subunits: alpha(3), beta(3), gamma(1), delta(1), epsilon(1). CF(0) has three main subunits: a(1), b(2) and c(9-12). The alpha and beta chains form an alternating ring which encloses part of the gamma chain. CF(1) is attached to CF(0) by a central stalk formed by the gamma and epsilon chains, while a peripheral stalk is formed by the delta and b chains.

The protein resides in the cell membrane. It carries out the reaction ATP + H2O + 4 H(+)(in) = ADP + phosphate + 5 H(+)(out). Functionally, produces ATP from ADP in the presence of a proton gradient across the membrane. The alpha chain is a regulatory subunit. The polypeptide is ATP synthase subunit alpha (Wigglesworthia glossinidia brevipalpis).